A 927-amino-acid chain; its full sequence is Lysine-specific demethylase JMJ28 (927 aa).

In terms of domain architecture, WRC spans 7 to 52; it reads VPDEFRCNRSDGKQWRCKRRALEGKKMCESHHSQQSLKRSKQKVAE. The Nuclear localization signal 1 motif lies at 30 to 37; that stretch reads GKKMCESH. The segment at 30 to 92 is disordered; sequence GKKMCESHHS…RLGKSKRKRV (63 aa). Residues 80-91 are compositionally biased toward basic residues; the sequence is RSKRLGKSKRKR. Residues 127-134 carry the Nuclear localization signal 2 motif; that stretch reads EKRKRLPN. 8 residues coordinate Zn(2+): C227, C230, C241, C244, C250, C253, C269, and C272. The segment at 227 to 273 adopts an RING-type; degenerate zinc-finger fold; it reads CHWCGTRGFGDLISCLSCEREFFCIDCIEKRNKGSKEEVEKKCPVCR. Basic and acidic residues predominate over residues 330–339; sequence ENDAEKKEGN. 2 disordered regions span residues 330–359 and 701–736; these read ENDA…QPCS and RSKN…SQHC. The JmjC domain maps to 601–881; it reads FPNHYAEILN…ESIKRVKELN (281 aa).

It belongs to the JARID1 histone demethylase family. As to quaternary structure, interacts with the FBH transcription factors FBH1, FBH2, FBH3 and FBH4. Fe(2+) serves as cofactor. As to expression, expressed in inflorescences, flowers, roots, siliques, leaves and stems, especially in the vasculature (mainly phloem), with highest levels in floral organs. Present at high levels in flowers, shoot apex and young seeds, but observed at low levels in dry seeds, root apex and anthers.

It localises to the nucleus. May function as histone H3 lysine demethylase and be involved in regulation of gene expression. Regulates flowering time by promoting CONSTANS (CO) and CONSTANS-LIKE genes (e.g. COL2 and COL5) expression via interaction with FBH transcription factors (FBH1, FBH2, FBH3 and FBH4) at their loci to remove H3K9me2 repressive histone marks. Also modulates the expression of several developmental genes such as MYB30, TFS1, AGL6 and RVE2. The chain is Lysine-specific demethylase JMJ28 from Arabidopsis thaliana (Mouse-ear cress).